A 362-amino-acid polypeptide reads, in one-letter code: Phosphoserine aminotransferase (362 aa).

The L-glutamate site is built by serine 9 and arginine 42. Residues 76-77, tryptophan 102, threonine 153, aspartate 174, and glutamine 197 contribute to the pyridoxal 5'-phosphate site; that span reads GR. Lysine 198 carries the post-translational modification N6-(pyridoxal phosphate)lysine. 239-240 provides a ligand contact to pyridoxal 5'-phosphate; sequence NT.

The protein belongs to the class-V pyridoxal-phosphate-dependent aminotransferase family. SerC subfamily. In terms of assembly, homodimer. Requires pyridoxal 5'-phosphate as cofactor.

It is found in the cytoplasm. The catalysed reaction is O-phospho-L-serine + 2-oxoglutarate = 3-phosphooxypyruvate + L-glutamate. It catalyses the reaction 4-(phosphooxy)-L-threonine + 2-oxoglutarate = (R)-3-hydroxy-2-oxo-4-phosphooxybutanoate + L-glutamate. The protein operates within amino-acid biosynthesis; L-serine biosynthesis; L-serine from 3-phospho-D-glycerate: step 2/3. Its pathway is cofactor biosynthesis; pyridoxine 5'-phosphate biosynthesis; pyridoxine 5'-phosphate from D-erythrose 4-phosphate: step 3/5. Functionally, catalyzes the reversible conversion of 3-phosphohydroxypyruvate to phosphoserine and of 3-hydroxy-2-oxo-4-phosphonooxybutanoate to phosphohydroxythreonine. This chain is Phosphoserine aminotransferase, found in Escherichia coli O157:H7.